We begin with the raw amino-acid sequence, 589 residues long: MRTHFCGLINETLIGHTVTLAGWTDVARNLGGVCFIDLRDHEGIVQITVDSRAIDQNNSELFKVASGLSYEDVLQVEGVVCARHAVNDKIKTGKVEVIATKIKILNKAAPLPFHAHENPGEDIRLKYRYLDLRRPEMQRMQRTRIKLVQALRRHLDMHGFQDIETPILTKATPEGARDFLVPARMHPGEFYALPQSPQLFKQILMVAGFDRYYQIARCFRDEALRADRQLEFTQLDMEFAFVSERDVQDFVEEMIRRVFKEVAGIELDTTFPRMTWKEAMRRFGSDKPDLRINLELIDVAALVADSTFTPFTDAVAHPNGRVAALRIPSGTVLSRKQIDEYAAYTAKYGATGLAYAKLAPTGEITSPIAKFFSEDAFASLLSHIGAEKGDIVFFGAGNYNKVSDFMSALRLKAGKDFALITADWRPLWVTDFPMFEWDEEAQRYVALHHPFTAPAAIDDIDELRAHARTALSRGYDMVLNGNEIGGGSIRIHRPEMQRAVFELLGITEDEARAKFGFLLDALNYGAPPHGGIAFGIDRIAALIAGTESIRDVIPFPKTTGAQCLMTDAPSPISEEQLSEIHVITKKTTP.

Glu174 provides a ligand contact to L-aspartate. The tract at residues 198 to 201 is aspartate; that stretch reads QLFK. An L-aspartate-binding site is contributed by Arg220. Residues 220-222 and Gln229 contribute to the ATP site; that span reads RDE. His448 provides a ligand contact to L-aspartate. An ATP-binding site is contributed by Glu483. Arg490 lines the L-aspartate pocket. An ATP-binding site is contributed by 535-538; sequence GIDR.

The protein belongs to the class-II aminoacyl-tRNA synthetase family. Type 1 subfamily. Homodimer.

The protein resides in the cytoplasm. It carries out the reaction tRNA(Asp) + L-aspartate + ATP = L-aspartyl-tRNA(Asp) + AMP + diphosphate. Its function is as follows. Catalyzes the attachment of L-aspartate to tRNA(Asp) in a two-step reaction: L-aspartate is first activated by ATP to form Asp-AMP and then transferred to the acceptor end of tRNA(Asp). This Xylella fastidiosa (strain M12) protein is Aspartate--tRNA ligase.